The chain runs to 92 residues: Small ribosomal subunit protein bS20 (92 aa).

The protein belongs to the bacterial ribosomal protein bS20 family.

Functionally, binds directly to 16S ribosomal RNA. The chain is Small ribosomal subunit protein bS20 from Persephonella marina (strain DSM 14350 / EX-H1).